Consider the following 90-residue polypeptide: U7-theraphotoxin-Hhn1i (90 aa).

Positions 1–19 are cleaved as a signal peptide; it reads MKTAIFTVVLALAVFAVLS. A propeptide spanning residues 20-50 is cleaved from the precursor; that stretch reads FGWEANEKALSEEFTELIHEKEAASETEARE. Intrachain disulfides connect cysteine 51–cysteine 65, cysteine 58–cysteine 70, and cysteine 64–cysteine 81.

This sequence belongs to the neurotoxin 10 (Hwtx-1) family. 13 (Hntx-13) subfamily. As to expression, expressed by the venom gland.

It is found in the secreted. Functionally, ion channel inhibitor. The protein is U7-theraphotoxin-Hhn1i of Cyriopagopus hainanus (Chinese bird spider).